A 63-amino-acid polypeptide reads, in one-letter code: Large ribosomal subunit protein eL24 (63 aa).

Residues cysteine 7, cysteine 10, cysteine 33, and cysteine 37 each contribute to the Zn(2+) site. Residues 7–37 form a C4-type zinc finger; the sequence is CSFCGGSIEPGTGLMYVLRNGQILWFCSSKC.

Belongs to the eukaryotic ribosomal protein eL24 family. As to quaternary structure, part of the 50S ribosomal subunit. Forms a cluster with proteins L3 and L14. It depends on Zn(2+) as a cofactor.

Its function is as follows. Binds to the 23S rRNA. In Aeropyrum pernix (strain ATCC 700893 / DSM 11879 / JCM 9820 / NBRC 100138 / K1), this protein is Large ribosomal subunit protein eL24.